Here is a 199-residue protein sequence, read N- to C-terminus: Peptidyl-tRNA hydrolase (199 aa).

Residue tyrosine 15 participates in tRNA binding. The active-site Proton acceptor is histidine 20. TRNA-binding residues include tyrosine 66, asparagine 68, and asparagine 114.

This sequence belongs to the PTH family. In terms of assembly, monomer.

It localises to the cytoplasm. It carries out the reaction an N-acyl-L-alpha-aminoacyl-tRNA + H2O = an N-acyl-L-amino acid + a tRNA + H(+). In terms of biological role, hydrolyzes ribosome-free peptidyl-tRNAs (with 1 or more amino acids incorporated), which drop off the ribosome during protein synthesis, or as a result of ribosome stalling. Catalyzes the release of premature peptidyl moieties from peptidyl-tRNA molecules trapped in stalled 50S ribosomal subunits, and thus maintains levels of free tRNAs and 50S ribosomes. The polypeptide is Peptidyl-tRNA hydrolase (Burkholderia multivorans (strain ATCC 17616 / 249)).